A 67-amino-acid chain; its full sequence is Large ribosomal subunit protein bL35 (67 aa).

A compositionally biased stretch (basic residues) spans 1–16 (MPKMKTKSGAKKRFRV). The interval 1 to 24 (MPKMKTKSGAKKRFRVRPGGTVKR) is disordered.

It belongs to the bacterial ribosomal protein bL35 family.

The polypeptide is Large ribosomal subunit protein bL35 (Polaromonas naphthalenivorans (strain CJ2)).